The primary structure comprises 245 residues: Biosynthetic peptidoglycan transglycosylase (245 aa).

The chain crosses the membrane as a helical span at residues 29-49; sequence IVLAVLIVLILPYALIVFYLL.

It belongs to the glycosyltransferase 51 family.

Its subcellular location is the cell inner membrane. It catalyses the reaction [GlcNAc-(1-&gt;4)-Mur2Ac(oyl-L-Ala-gamma-D-Glu-L-Lys-D-Ala-D-Ala)](n)-di-trans,octa-cis-undecaprenyl diphosphate + beta-D-GlcNAc-(1-&gt;4)-Mur2Ac(oyl-L-Ala-gamma-D-Glu-L-Lys-D-Ala-D-Ala)-di-trans,octa-cis-undecaprenyl diphosphate = [GlcNAc-(1-&gt;4)-Mur2Ac(oyl-L-Ala-gamma-D-Glu-L-Lys-D-Ala-D-Ala)](n+1)-di-trans,octa-cis-undecaprenyl diphosphate + di-trans,octa-cis-undecaprenyl diphosphate + H(+). It functions in the pathway cell wall biogenesis; peptidoglycan biosynthesis. Its function is as follows. Peptidoglycan polymerase that catalyzes glycan chain elongation from lipid-linked precursors. This is Biosynthetic peptidoglycan transglycosylase from Rhizobium johnstonii (strain DSM 114642 / LMG 32736 / 3841) (Rhizobium leguminosarum bv. viciae).